The chain runs to 156 residues: Endoribonuclease YbeY (156 aa).

Residues H117, H121, and H127 each contribute to the Zn(2+) site.

It belongs to the endoribonuclease YbeY family. The cofactor is Zn(2+).

The protein localises to the cytoplasm. Functionally, single strand-specific metallo-endoribonuclease involved in late-stage 70S ribosome quality control and in maturation of the 3' terminus of the 16S rRNA. The protein is Endoribonuclease YbeY of Shewanella piezotolerans (strain WP3 / JCM 13877).